The following is an 842-amino-acid chain: Protein P (842 aa).

Residues 1-177 (MPLSYQHFRR…FCGSPYSWEQ (177 aa)) are terminal protein domain (TP). The segment at 178–345 (ELHHGAFLDG…YCLTHLVNLL (168 aa)) is spacer. Residues 186–273 (DGPSRMGEES…AKNIASRSAS (88 aa)) are disordered. The segment covering 223–239 (GPQSQQRPLDGSQQGRS) has biased composition (polar residues). The polymerase/reverse transcriptase domain (RT) stretch occupies residues 346-689 (EDWGPCTEHG…YLNLYPVARQ (344 aa)). The region spanning 356–599 (RHHIRIPRTP…YSLNFMGYVI (244 aa)) is the Reverse transcriptase domain. Mg(2+) is bound by residues aspartate 428, aspartate 550, and aspartate 551.

The protein belongs to the hepadnaviridae P protein family.

The enzyme catalyses DNA(n) + a 2'-deoxyribonucleoside 5'-triphosphate = DNA(n+1) + diphosphate. It carries out the reaction Endonucleolytic cleavage to 5'-phosphomonoester.. With respect to regulation, activated by host HSP70 and HSP40 in vitro to be able to bind the epsilon loop of the pgRNA. Because deletion of the RNase H region renders the protein partly chaperone-independent, the chaperones may be needed indirectly to relieve occlusion of the RNA-binding site by this domain. Inhibited by several reverse-transcriptase inhibitors: Lamivudine, Adefovir and Entecavir. Functionally, multifunctional enzyme that converts the viral RNA genome into dsDNA in viral cytoplasmic capsids. This enzyme displays a DNA polymerase activity that can copy either DNA or RNA templates, and a ribonuclease H (RNase H) activity that cleaves the RNA strand of RNA-DNA heteroduplexes in a partially processive 3'- to 5'-endonucleasic mode. Neo-synthesized pregenomic RNA (pgRNA) are encapsidated together with the P protein, and reverse-transcribed inside the nucleocapsid. Initiation of reverse-transcription occurs first by binding the epsilon loop on the pgRNA genome, and is initiated by protein priming, thereby the 5'-end of (-)DNA is covalently linked to P protein. Partial (+)DNA is synthesized from the (-)DNA template and generates the relaxed circular DNA (RC-DNA) genome. After budding and infection, the RC-DNA migrates in the nucleus, and is converted into a plasmid-like covalently closed circular DNA (cccDNA). The activity of P protein does not seem to be necessary for cccDNA generation, and is presumably released from (+)DNA by host nuclear DNA repair machinery. The polypeptide is Protein P (Homo sapiens (Human)).